A 364-amino-acid polypeptide reads, in one-letter code: Chorismate synthase (364 aa).

2 residues coordinate NADP(+): R47 and R53. Residues 124-126, G286, 301-305, and R327 each bind FMN; these read RSS and KPTAT.

The protein belongs to the chorismate synthase family. In terms of assembly, homotetramer. It depends on FMNH2 as a cofactor.

The catalysed reaction is 5-O-(1-carboxyvinyl)-3-phosphoshikimate = chorismate + phosphate. The protein operates within metabolic intermediate biosynthesis; chorismate biosynthesis; chorismate from D-erythrose 4-phosphate and phosphoenolpyruvate: step 7/7. In terms of biological role, catalyzes the anti-1,4-elimination of the C-3 phosphate and the C-6 proR hydrogen from 5-enolpyruvylshikimate-3-phosphate (EPSP) to yield chorismate, which is the branch point compound that serves as the starting substrate for the three terminal pathways of aromatic amino acid biosynthesis. This reaction introduces a second double bond into the aromatic ring system. The chain is Chorismate synthase from Acaryochloris marina (strain MBIC 11017).